The chain runs to 995 residues: Translation initiation factor IF-2 (995 aa).

The segment at 53–399 (NNAGSPAPAA…SGAPRGQGQV (347 aa)) is disordered. Pro residues-rich tracts occupy residues 60–87 (PAAPPAVAPPTPTPTPPRTPTPAPPPGG) and 104–119 (TPGPKPKGPVPGPPQS). Low complexity predominate over residues 135 to 160 (AAAEARAAALKAEQEAAVKAAQAARQ). The segment covering 161-171 (QQRENVRREPP) has biased composition (basic and acidic residues). The span at 177 to 192 (RPGPRPGPGTMPPRPG) shows a compositional bias: pro residues. Residues 193-202 (SPAAGRSGAP) are compositionally biased toward low complexity. Composition is skewed to pro residues over residues 203–213 (APGPGPRPGGR) and 242–264 (RPSPASMPPRPSPASMPPRPSPA). Residues 273-363 (RPGGPGSGRP…GAAGAFGRPG (91 aa)) show a composition bias toward gly residues. The segment covering 367-376 (TRGRKSKKQR) has biased composition (basic residues). Residues 486–658 (SRPPVVTVMG…VLLTADASLE (173 aa)) form the tr-type G domain. A G1 region spans residues 495 to 502 (GHVDHGKT). 495-502 (GHVDHGKT) is a binding site for GTP. The segment at 520–524 (GITQH) is G2. The G3 stretch occupies residues 545–548 (DTPG). GTP contacts are provided by residues 545 to 549 (DTPGH) and 599 to 602 (NKID). The segment at 599 to 602 (NKID) is G4. The interval 635–637 (AAK) is G5.

Belongs to the TRAFAC class translation factor GTPase superfamily. Classic translation factor GTPase family. IF-2 subfamily.

The protein resides in the cytoplasm. One of the essential components for the initiation of protein synthesis. Protects formylmethionyl-tRNA from spontaneous hydrolysis and promotes its binding to the 30S ribosomal subunits. Also involved in the hydrolysis of GTP during the formation of the 70S ribosomal complex. The sequence is that of Translation initiation factor IF-2 from Salinispora arenicola (strain CNS-205).